Here is a 368-residue protein sequence, read N- to C-terminus: tRNA/tmRNA (uracil-C(5))-methyltransferase (368 aa).

Positions 186, 214, 219, 235, and 295 each coordinate S-adenosyl-L-methionine. Cysteine 320 acts as the Nucleophile in catalysis. The Proton acceptor role is filled by glutamate 354.

Belongs to the class I-like SAM-binding methyltransferase superfamily. RNA M5U methyltransferase family. TrmA subfamily.

The catalysed reaction is uridine(54) in tRNA + S-adenosyl-L-methionine = 5-methyluridine(54) in tRNA + S-adenosyl-L-homocysteine + H(+). It carries out the reaction uridine(341) in tmRNA + S-adenosyl-L-methionine = 5-methyluridine(341) in tmRNA + S-adenosyl-L-homocysteine + H(+). In terms of biological role, dual-specificity methyltransferase that catalyzes the formation of 5-methyluridine at position 54 (m5U54) in all tRNAs, and that of position 341 (m5U341) in tmRNA (transfer-mRNA). The protein is tRNA/tmRNA (uracil-C(5))-methyltransferase of Aromatoleum aromaticum (strain DSM 19018 / LMG 30748 / EbN1) (Azoarcus sp. (strain EbN1)).